Reading from the N-terminus, the 467-residue chain is UDP-N-acetylmuramate--L-alanine ligase (467 aa).

114–120 (GTHGKTT) provides a ligand contact to ATP.

This sequence belongs to the MurCDEF family.

It is found in the cytoplasm. It carries out the reaction UDP-N-acetyl-alpha-D-muramate + L-alanine + ATP = UDP-N-acetyl-alpha-D-muramoyl-L-alanine + ADP + phosphate + H(+). It participates in cell wall biogenesis; peptidoglycan biosynthesis. Cell wall formation. In Rhodopseudomonas palustris (strain BisA53), this protein is UDP-N-acetylmuramate--L-alanine ligase.